A 104-amino-acid chain; its full sequence is Hydrogen cyanide synthase subunit HcnA (104 aa).

The 82-residue stretch at 16–97 folds into the 2Fe-2S ferredoxin-type domain; the sequence is ADMTIHLNGQ…GMRVETESNR (82 aa). [2Fe-2S] cluster contacts are provided by cysteine 60, cysteine 65, cysteine 68, and cysteine 81.

In terms of assembly, heterotrimer of HcnA, HcnB and HcnC.

The protein resides in the cell membrane. The enzyme catalyses glycine + 2 A = hydrogen cyanide + 2 AH2 + CO2. With respect to regulation, oxygen is necessary for cyanogenesis. Activated by succinate, glycine methyl ester, glucose and D,L-methionine in addition to glycine. Phenazine methosulfate, methylene blue, 2,6-dichlorophenolindophenol (DCIP) and ferricyanide can replace oxygen for the reaction. Inhibited by pyrrolnitrin and acriflavine at 1 mM concentration. Its function is as follows. A three-component membrane-bound flavoenzyme that catalyzes the formation of hydrogen cyanide, a secondary metabolite, by transfer of electrons to a cyanide-resistant branch of the aerobic respiratory chain. This is Hydrogen cyanide synthase subunit HcnA from Pseudomonas aeruginosa (strain ATCC 15692 / DSM 22644 / CIP 104116 / JCM 14847 / LMG 12228 / 1C / PRS 101 / PAO1).